We begin with the raw amino-acid sequence, 478 residues long: Chromosomal replication initiator protein DnaA (478 aa).

The domain I, interacts with DnaA modulators stretch occupies residues 1–90 (MSVELWQQCV…KRSSAPRAVQ (90 aa)). The interval 91-141 (PASPPPAVVQAAPVAIEEASAARTVDAQPVAPATVRTERSVQVEGGLKHTS) is domain II. The interval 142–358 (YLNRAFTFEN…GALKRVIAHS (217 aa)) is domain III, AAA+ region. ATP contacts are provided by Gly186, Gly188, Lys189, and Thr190. The tract at residues 359–478 (HFTNHPITIE…YKNLLRTLTT (120 aa)) is domain IV, binds dsDNA.

This sequence belongs to the DnaA family. In terms of assembly, oligomerizes as a right-handed, spiral filament on DNA at oriC.

Its subcellular location is the cytoplasm. Its function is as follows. Plays an essential role in the initiation and regulation of chromosomal replication. ATP-DnaA binds to the origin of replication (oriC) to initiate formation of the DNA replication initiation complex once per cell cycle. Binds the DnaA box (a 9 base pair repeat at the origin) and separates the double-stranded (ds)DNA. Forms a right-handed helical filament on oriC DNA; dsDNA binds to the exterior of the filament while single-stranded (ss)DNA is stabiized in the filament's interior. The ATP-DnaA-oriC complex binds and stabilizes one strand of the AT-rich DNA unwinding element (DUE), permitting loading of DNA polymerase. After initiation quickly degrades to an ADP-DnaA complex that is not apt for DNA replication. Binds acidic phospholipids. The sequence is that of Chromosomal replication initiator protein DnaA from Azotobacter vinelandii (strain DJ / ATCC BAA-1303).